The primary structure comprises 1092 residues: MTNTKYYPEVSSNADFAGLEREILKFWQDNNIFQKSIDDRNGESEFIFYDGPPFANGLPHYGHLLTGFIKDVYARYQTIKGKKVERRFGWDCHGLPAEMQSEKELGISGRLAIANFGIEKFNAHCRASVMKYANDWEEYVTRQARWVDFKNSYKTMDKNFMESVLWAFKELYNKGLLYESMRVMPYSWACETPLSNFETRLDNSYRERADKAVTVSFVLSHPVTTTTGSFKEYRILAWTTTPWTLPSNLALAVGSDIDYALVPKNDVCYIIAAYSVSKYAKELGLSGEENFEIIKGSALQGLNYKSLFDYFENHPNSFKIFAGDFVVEGDGTGVVHMAPGFGEDDQILCESKGIELVCPVDNSGKFTKEIPDLEGLQVFDANDKIIIKLKEQGNWLKTEQYIHNYPHCWRTDTPLIYKAVPSWYVKVTQFKDRMVELNQQINWIPFHVKDNLFGKWLENARDWSISRNRFWGTPLPVWKSDDPKYPRIDVYGSIEELEKDFGVKVTDLHRPFIDELTRPNPDDPTGKSTMRRIEDVFDCWFESGSMPYGQAHYPFENKEWFEDHFPADFIVEYSAQTRGWFYTLMVLSTALFDRPPFLNCICHGVILDSTGQKLSKRLNNYADPLELFDKYGSDALRVTMLSSNVVKGQELLIDKDGKMVFDTLRLFIKPIWNAYHFFTMYANADSLKGKLNFSSKNVLDVYILSKLKIAVQKIEESLDNFDTQTAYHAVSAFFEVLNNWYIRRSRARFWKSAKDTDKQNAYNTLYSCLDTMAIAMSALVPMISEAIYKGLRHCEERNDTALSGKSNIIARKDTSLDKAISGVSHKIATALSVPRNDAISVHLCNYPTLSDFEINHELVATMDNVLDICSNSLFIRSTENIRVRQPLASIAIISKHNNNLKDFEDLIKDEINVKAVIYRDDLENYASKKLSINFPMLGKRLPHKMKEIIAASKKGEWEAITGGLAICGETLNSDEYKLVLEPYSHIKGAASFENNSSLLILDLELTPELIEEGYARDIVRFIQQARKDADFSITDRILIEIISEFNLSKIIDNYGDFIKEQTLGEFAKNFTPDYVSKVALENHQIQLKVKKS.

The 'HIGH' region motif lies at 53-63; the sequence is PFANGLPHYGH. The 'KMSKS' region signature appears at 613–617; it reads KLSKR. Lysine 616 contributes to the ATP binding site.

This sequence belongs to the class-I aminoacyl-tRNA synthetase family. IleS type 2 subfamily. In terms of assembly, monomer. It depends on Zn(2+) as a cofactor.

It localises to the cytoplasm. The catalysed reaction is tRNA(Ile) + L-isoleucine + ATP = L-isoleucyl-tRNA(Ile) + AMP + diphosphate. Catalyzes the attachment of isoleucine to tRNA(Ile). As IleRS can inadvertently accommodate and process structurally similar amino acids such as valine, to avoid such errors it has two additional distinct tRNA(Ile)-dependent editing activities. One activity is designated as 'pretransfer' editing and involves the hydrolysis of activated Val-AMP. The other activity is designated 'posttransfer' editing and involves deacylation of mischarged Val-tRNA(Ile). This Rickettsia conorii (strain ATCC VR-613 / Malish 7) protein is Isoleucine--tRNA ligase.